The chain runs to 251 residues: MTNAVTVKNITFQEGETLICVPLIGKTLDEILGNAHGLVDAGADIIEWRVDHFTQVRDMTQVMAALAEIRGALKALPLLFTFRSKKEGGETEISDEAYFALNREAARSGLVDVIDIELFNDEAQIHALVDDAHAAGVKVIMSNHDFHKTPAQEDIIYRLRRMQDLGADLPKIAVMPQSPQDVLTLLAATLTMKEKYATRPLITMSMGKSGGVSRVTGRLFGSAMTFGTVGQASAPGQIAIAKLREVMDILS.

3-dehydroquinate is bound by residues 47 to 49 and Arg-83; that span reads EWR. The active-site Proton donor/acceptor is the His-144. The active-site Schiff-base intermediate with substrate is the Lys-171. Residues Arg-214, Ser-233, and Gln-237 each coordinate 3-dehydroquinate.

Belongs to the type-I 3-dehydroquinase family. As to quaternary structure, homodimer.

The catalysed reaction is 3-dehydroquinate = 3-dehydroshikimate + H2O. Its pathway is metabolic intermediate biosynthesis; chorismate biosynthesis; chorismate from D-erythrose 4-phosphate and phosphoenolpyruvate: step 3/7. Its function is as follows. Involved in the third step of the chorismate pathway, which leads to the biosynthesis of aromatic amino acids. Catalyzes the cis-dehydration of 3-dehydroquinate (DHQ) and introduces the first double bond of the aromatic ring to yield 3-dehydroshikimate. The protein is 3-dehydroquinate dehydratase of Klebsiella pneumoniae (strain 342).